The following is a 272-amino-acid chain: HMP-PP phosphatase (272 aa).

Asp-8 (nucleophile) is an active-site residue. Mg(2+)-binding residues include Asp-8, Asp-10, and Asp-212.

It belongs to the HAD-like hydrolase superfamily. Cof family. Requires Mg(2+) as cofactor.

The enzyme catalyses 4-amino-2-methyl-5-(diphosphooxymethyl)pyrimidine + H2O = 4-amino-2-methyl-5-(phosphooxymethyl)pyrimidine + phosphate + H(+). Its function is as follows. Catalyzes the hydrolysis of 4-amino-2-methyl-5-hydroxymethylpyrimidine pyrophosphate (HMP-PP) to 4-amino-2-methyl-5-hydroxymethylpyrimidine phosphate (HMP-P). This Escherichia coli O8 (strain IAI1) protein is HMP-PP phosphatase.